The sequence spans 398 residues: Cap-specific mRNA (nucleoside-2'-O-)-methyltransferase 1 (398 aa).

Residues Q85–L298 enclose the RrmJ-type SAM-dependent 2'-O-MTase domain. S-adenosyl-L-methionine-binding residues include G132 and D211. K252 (proton acceptor) is an active-site residue. Residues L371 to G398 are disordered.

It carries out the reaction a 5'-end (N(7)-methyl 5'-triphosphoguanosine)-ribonucleoside in mRNA + S-adenosyl-L-methionine = a 5'-end (N(7)-methyl 5'-triphosphoguanosine)-(2'-O-methyl-ribonucleoside) in mRNA + S-adenosyl-L-homocysteine + H(+). S-adenosyl-L-methionine-dependent methyltransferase that mediates RNA cap1 2'-O-ribose methylation to the 5'-cap structure of RNAs. Methylates the ribose of the first nucleotide of a m(7)GpppG-capped mRNA to produce m(7)GpppNmp (cap1). This is Cap-specific mRNA (nucleoside-2'-O-)-methyltransferase 1 from Leishmania braziliensis.